Here is a 206-residue protein sequence, read N- to C-terminus: Guanylate kinase (206 aa).

Residues 7-185 form the Guanylate kinase-like domain; sequence GLLIVISGPS…AVEKIRAIII (179 aa). 14–21 lines the ATP pocket; the sequence is GPSGAGKG.

The protein belongs to the guanylate kinase family.

It localises to the cytoplasm. The catalysed reaction is GMP + ATP = GDP + ADP. In terms of biological role, essential for recycling GMP and indirectly, cGMP. The chain is Guanylate kinase from Caldanaerobacter subterraneus subsp. tengcongensis (strain DSM 15242 / JCM 11007 / NBRC 100824 / MB4) (Thermoanaerobacter tengcongensis).